The following is a 131-amino-acid chain: Large ribosomal subunit protein bL12 (131 aa).

This sequence belongs to the bacterial ribosomal protein bL12 family. As to quaternary structure, homodimer. Part of the ribosomal stalk of the 50S ribosomal subunit. Forms a multimeric L10(L12)X complex, where L10 forms an elongated spine to which 2 to 4 L12 dimers bind in a sequential fashion. Binds GTP-bound translation factors.

Functionally, forms part of the ribosomal stalk which helps the ribosome interact with GTP-bound translation factors. Is thus essential for accurate translation. The sequence is that of Large ribosomal subunit protein bL12 from Tropheryma whipplei (strain Twist) (Whipple's bacillus).